The primary structure comprises 286 residues: Ribonuclease Z (286 aa).

7 residues coordinate Zn(2+): H61, H63, D65, H66, H153, D176, and H240. The active-site Proton acceptor is the D65.

This sequence belongs to the RNase Z family. As to quaternary structure, homodimer. It depends on Zn(2+) as a cofactor.

The catalysed reaction is Endonucleolytic cleavage of RNA, removing extra 3' nucleotides from tRNA precursor, generating 3' termini of tRNAs. A 3'-hydroxy group is left at the tRNA terminus and a 5'-phosphoryl group is left at the trailer molecule.. Functionally, zinc phosphodiesterase, which displays some tRNA 3'-processing endonuclease activity. Probably involved in tRNA maturation, by removing a 3'-trailer from precursor tRNA. The polypeptide is Ribonuclease Z (Mycolicibacterium gilvum (strain PYR-GCK) (Mycobacterium gilvum (strain PYR-GCK))).